Here is a 208-residue protein sequence, read N- to C-terminus: Uracil phosphoribosyltransferase (208 aa).

5-phospho-alpha-D-ribose 1-diphosphate is bound by residues R78, R103, and 130 to 138; that span reads DPMLATGGS. Uracil is bound by residues I193 and 198–200; that span reads GDA. D199 is a binding site for 5-phospho-alpha-D-ribose 1-diphosphate.

The protein belongs to the UPRTase family. Mg(2+) serves as cofactor.

The catalysed reaction is UMP + diphosphate = 5-phospho-alpha-D-ribose 1-diphosphate + uracil. It participates in pyrimidine metabolism; UMP biosynthesis via salvage pathway; UMP from uracil: step 1/1. Allosterically activated by GTP. Catalyzes the conversion of uracil and 5-phospho-alpha-D-ribose 1-diphosphate (PRPP) to UMP and diphosphate. This is Uracil phosphoribosyltransferase from Haemophilus influenzae (strain PittEE).